Consider the following 453-residue polypeptide: Dihydrolipoyllysine-residue succinyltransferase component of 2-oxoglutarate dehydrogenase complex, mitochondrial (453 aa).

Residues 1-67 (MLSRSRCVSR…RFFRTTAVCK (67 aa)) constitute a mitochondrion transit peptide. A Lipoyl-binding domain is found at 70–144 (LVTVKTPAFA…EGGTPLFTLR (75 aa)). Phosphoserine is present on S81. Residue K110 is modified to N6-lipoyllysine. Positions 152 to 172 (KAKPAEAPAAAAPKAEPTAAA) are enriched in low complexity. Positions 152–225 (KAKPAEAPAA…GKGLRSEHRE (74 aa)) are disordered. K154 is subject to N6-acetyllysine. Residues 173-196 (VPPPAAPIPTQMPPVPSPSQPPSG) are compositionally biased toward pro residues. N6-acetyllysine occurs at positions 267, 272, 273, 277, and 307. Residues H424 and D428 contribute to the active site.

This sequence belongs to the 2-oxoacid dehydrogenase family. In terms of assembly, the 2-oxoglutarate dehydrogenase complex is composed of OGDH (2-oxoglutarate dehydrogenase; E1), DLST (dihydrolipoamide succinyltransferase; E2), DLD (dihydrolipoamide dehydrogenase; E3) and the assembly factor KGD4. It contains multiple copies of the three enzymatic components (E1, E2 and E3). In the nucleus, the 2-oxoglutarate dehydrogenase complex associates with KAT2A. Interacts with ABHD11; this interaction maintains the functional lipoylation of the 2-oxoglutarate dehydrogenase complex. Requires (R)-lipoate as cofactor.

Its subcellular location is the mitochondrion matrix. It is found in the nucleus. The catalysed reaction is N(6)-[(R)-dihydrolipoyl]-L-lysyl-[protein] + succinyl-CoA = N(6)-[(R)-S(8)-succinyldihydrolipoyl]-L-lysyl-[protein] + CoA. It participates in amino-acid degradation; L-lysine degradation via saccharopine pathway; glutaryl-CoA from L-lysine: step 6/6. It functions in the pathway carbohydrate metabolism; tricarboxylic acid cycle. Its function is as follows. Dihydrolipoamide succinyltransferase (E2) component of the 2-oxoglutarate dehydrogenase complex. The 2-oxoglutarate dehydrogenase complex catalyzes the overall conversion of 2-oxoglutarate to succinyl-CoA and CO(2). The 2-oxoglutarate dehydrogenase complex is mainly active in the mitochondrion. A fraction of the 2-oxoglutarate dehydrogenase complex also localizes in the nucleus and is required for lysine succinylation of histones: associates with KAT2A on chromatin and provides succinyl-CoA to histone succinyltransferase KAT2A. In Homo sapiens (Human), this protein is Dihydrolipoyllysine-residue succinyltransferase component of 2-oxoglutarate dehydrogenase complex, mitochondrial.